Reading from the N-terminus, the 256-residue chain is Probable transcriptional regulatory protein cce_0894 (256 aa).

The protein belongs to the TACO1 family.

It is found in the cytoplasm. The polypeptide is Probable transcriptional regulatory protein cce_0894 (Crocosphaera subtropica (strain ATCC 51142 / BH68) (Cyanothece sp. (strain ATCC 51142))).